We begin with the raw amino-acid sequence, 741 residues long: Translation initiation factor IF-2 (741 aa).

Basic and acidic residues-rich tracts occupy residues 48–74 and 107–123; these read HQYR…DKPK and KGKE…EKKA. A disordered region spans residues 48-158; the sequence is HQYRPKAEKK…PQPAKKEKEL (111 aa). Residues 127–139 show a composition bias toward basic residues; sequence AKKKGKGPAKGKK. Residues 140 to 151 show a composition bias toward low complexity; it reads QAAPAAKQVPQP. The tr-type G domain maps to 242 to 411; sequence ERPPVVTIMG…LLVSEMEELK (170 aa). The segment at 251–258 is G1; that stretch reads GHVDHGKT. 251–258 is a binding site for GTP; sequence GHVDHGKT. Positions 276 to 280 are G2; it reads GITQH. The G3 stretch occupies residues 297–300; it reads DTPG. Residues 297-301 and 351-354 each bind GTP; these read DTPGH and NKMD. The interval 351 to 354 is G4; the sequence is NKMD. A G5 region spans residues 387–389; sequence SAK.

Belongs to the TRAFAC class translation factor GTPase superfamily. Classic translation factor GTPase family. IF-2 subfamily.

The protein localises to the cytoplasm. Functionally, one of the essential components for the initiation of protein synthesis. Protects formylmethionyl-tRNA from spontaneous hydrolysis and promotes its binding to the 30S ribosomal subunits. Also involved in the hydrolysis of GTP during the formation of the 70S ribosomal complex. The polypeptide is Translation initiation factor IF-2 (infB) (Geobacillus stearothermophilus (Bacillus stearothermophilus)).